The sequence spans 2694 residues: Neurobeachin-like protein 1 (2694 aa).

Disordered regions lie at residues 1289 to 1314 (VLMKDNDKNMSTEDTKKNSDEKTDEE), 1330 to 1350 (SLEDRHSLDSNTPLFPEDSSV), and 1381 to 1411 (CEMSDSGSQVPDSLPSTPSPVESTKSFSVHS). Positions 1290–1314 (LMKDNDKNMSTEDTKKNSDEKTDEE) are enriched in basic and acidic residues. Polar residues predominate over residues 1383 to 1409 (MSDSGSQVPDSLPSTPSPVESTKSFSV). A BEACH-type PH domain is found at 1883 to 1980 (DQKEKLVLME…VRNKIYSRLL (98 aa)). One can recognise a BEACH domain in the interval 1992-2284 (RSPQELFKAS…QLLKEPHPPR (293 aa)). 2 WD repeats span residues 2439 to 2478 (RHMDIVTCLATDYCGIHLISGSRDTTCMIWQITQQGGVPV) and 2490 to 2531 (GHTN…RTLR).

It belongs to the WD repeat neurobeachin family. Highly expressed in brain, kidney, prostate and testis. Weakly expressed in ovary, small intestine, colon and peripheral blood leukocytes. May be correlative to several tumors, such as ovary serous adenocarcinoma and metastasis mammary gland carcinoma breast.

This is Neurobeachin-like protein 1 (NBEAL1) from Homo sapiens (Human).